We begin with the raw amino-acid sequence, 263 residues long: Hemin import ATP-binding protein HmuV (263 aa).

Positions 2-242 (IEARDVSVDI…DLIEKVFDCR (241 aa)) constitute an ABC transporter domain. 34-41 (GPNGSGKT) lines the ATP pocket.

This sequence belongs to the ABC transporter superfamily. Heme (hemin) importer (TC 3.A.1.14.5) family. In terms of assembly, the complex is composed of two ATP-binding proteins (HmuV), two transmembrane proteins (HmuU) and a solute-binding protein (HmuT).

Its subcellular location is the cell inner membrane. In terms of biological role, part of the ABC transporter complex HmuTUV involved in hemin import. Responsible for energy coupling to the transport system. This Mesorhizobium japonicum (strain LMG 29417 / CECT 9101 / MAFF 303099) (Mesorhizobium loti (strain MAFF 303099)) protein is Hemin import ATP-binding protein HmuV.